Reading from the N-terminus, the 549-residue chain is Pyrophosphate--fructose 6-phosphate 1-phosphotransferase (549 aa).

Diphosphate is bound at residue Gly-78. Residue Asp-172 coordinates Mg(2+). Residues 200 to 202 (TID), 239 to 240 (KY), 247 to 249 (MGR), Glu-308, and 421 to 424 (YEGR) contribute to the substrate site. Asp-202 (proton acceptor) is an active-site residue.

This sequence belongs to the phosphofructokinase type A (PFKA) family. PPi-dependent PFK group II subfamily. Clade 'Long' sub-subfamily. In terms of assembly, homodimer. Mg(2+) serves as cofactor.

Its subcellular location is the cytoplasm. It catalyses the reaction beta-D-fructose 6-phosphate + diphosphate = beta-D-fructose 1,6-bisphosphate + phosphate + H(+). The protein operates within carbohydrate degradation; glycolysis; D-glyceraldehyde 3-phosphate and glycerone phosphate from D-glucose: step 3/4. With respect to regulation, non-allosteric. Functionally, catalyzes the phosphorylation of D-fructose 6-phosphate, the first committing step of glycolysis. Uses inorganic phosphate (PPi) as phosphoryl donor instead of ATP like common ATP-dependent phosphofructokinases (ATP-PFKs), which renders the reaction reversible, and can thus function both in glycolysis and gluconeogenesis. Consistently, PPi-PFK can replace the enzymes of both the forward (ATP-PFK) and reverse (fructose-bisphosphatase (FBPase)) reactions. The chain is Pyrophosphate--fructose 6-phosphate 1-phosphotransferase from Porphyromonas gingivalis (Bacteroides gingivalis).